Here is a 734-residue protein sequence, read N- to C-terminus: DNA ligase (734 aa).

Residues 42-46 (DAEYD), 91-92 (SL), and Glu-125 each bind NAD(+). The active-site N6-AMP-lysine intermediate is Lys-127. Residues Arg-148, Glu-185, Lys-301, and Lys-325 each contribute to the NAD(+) site. Zn(2+)-binding residues include Cys-430, Cys-433, Cys-454, and Cys-460. One can recognise a BRCT domain in the interval 655 to 734 (SADSEVAGKT…DTWLQRVGKA (80 aa)).

This sequence belongs to the NAD-dependent DNA ligase family. LigA subfamily. It depends on Mg(2+) as a cofactor. Requires Mn(2+) as cofactor.

The enzyme catalyses NAD(+) + (deoxyribonucleotide)n-3'-hydroxyl + 5'-phospho-(deoxyribonucleotide)m = (deoxyribonucleotide)n+m + AMP + beta-nicotinamide D-nucleotide.. Its function is as follows. DNA ligase that catalyzes the formation of phosphodiester linkages between 5'-phosphoryl and 3'-hydroxyl groups in double-stranded DNA using NAD as a coenzyme and as the energy source for the reaction. It is essential for DNA replication and repair of damaged DNA. The protein is DNA ligase of Mesorhizobium japonicum (strain LMG 29417 / CECT 9101 / MAFF 303099) (Mesorhizobium loti (strain MAFF 303099)).